Here is a 318-residue protein sequence, read N- to C-terminus: uncharacterized protein (318 aa).

Belongs to the asfivirus F317L family.

It localises to the virion. This is an uncharacterized protein from African swine fever virus (isolate Tick/Malawi/Lil 20-1/1983) (ASFV).